Consider the following 96-residue polypeptide: Co-chaperonin GroES (96 aa).

Belongs to the GroES chaperonin family. As to quaternary structure, heptamer of 7 subunits arranged in a ring. Interacts with the chaperonin GroEL.

It is found in the cytoplasm. Together with the chaperonin GroEL, plays an essential role in assisting protein folding. The GroEL-GroES system forms a nano-cage that allows encapsulation of the non-native substrate proteins and provides a physical environment optimized to promote and accelerate protein folding. GroES binds to the apical surface of the GroEL ring, thereby capping the opening of the GroEL channel. The polypeptide is Co-chaperonin GroES (Methylobacillus flagellatus (strain ATCC 51484 / DSM 6875 / VKM B-1610 / KT)).